A 440-amino-acid polypeptide reads, in one-letter code: Transposon Ty1-PR3 Gag polyprotein (440 aa).

3 stretches are compositionally biased toward polar residues: residues 1-23, 48-60, and 127-152; these read MESQ…SVTS, TKAN…TPAS, and QSQF…GNTF. Disordered regions lie at residues 1 to 93, 126 to 173, and 352 to 440; these read MESQ…MMTQ, PQSQ…RPPP, and GSRN…PGTY. The span at 153–165 shows a compositional bias: low complexity; it reads TDSSSADSDMTST. The interval 299–401 is RNA-binding; that stretch reads NNGIHINNKV…NSKSKTARAH (103 aa). The span at 402–418 shows a compositional bias: low complexity; sequence NVSTSNNSPSTDNDSIS. Serine 416 is subject to Phosphoserine. Positions 419–428 are enriched in polar residues; sequence KSTTEPIQLN. The span at 429-440 shows a compositional bias: basic and acidic residues; the sequence is NKHDLHLRPGTY.

Homotrimer.

Its subcellular location is the cytoplasm. In terms of biological role, capsid protein (CA) is the structural component of the virus-like particle (VLP), forming the shell that encapsulates the retrotransposons dimeric RNA genome. The particles are assembled from trimer-clustered units and there are holes in the capsid shells that allow for the diffusion of macromolecules. CA also has nucleocapsid-like chaperone activity, promoting primer tRNA(i)-Met annealing to the multipartite primer-binding site (PBS), dimerization of Ty1 RNA and initiation of reverse transcription. In Saccharomyces cerevisiae (strain ATCC 204508 / S288c) (Baker's yeast), this protein is Transposon Ty1-PR3 Gag polyprotein (TY1A-PR3).